We begin with the raw amino-acid sequence, 415 residues long: MATH domain and coiled-coil domain-containing protein At2g42465 (415 aa).

An MATH domain is found at 6–130; the sequence is RKALTLTVTN…NDRFNIEIYI (125 aa). The stretch at 244-341 forms a coiled coil; that stretch reads FKLEWLKAKL…LLKDTYSDLK (98 aa).

The protein is MATH domain and coiled-coil domain-containing protein At2g42465 of Arabidopsis thaliana (Mouse-ear cress).